A 183-amino-acid polypeptide reads, in one-letter code: Integrase-like protein y4lS (183 aa).

The Resolvase/invertase-type recombinase catalytic domain maps to 2-136 (ARIGYARTFT…EGIAAARKRG (135 aa)).

It belongs to the site-specific recombinase resolvase family.

This chain is Integrase-like protein y4lS, found in Sinorhizobium fredii (strain NBRC 101917 / NGR234).